The sequence spans 675 residues: DNA ligase (675 aa).

Residues 41-45 (DAEYD), 90-91 (SL), and Glu-120 contribute to the NAD(+) site. The N6-AMP-lysine intermediate role is filled by Lys-122. 4 residues coordinate NAD(+): Arg-143, Glu-178, Lys-295, and Lys-319. The Zn(2+) site is built by Cys-413, Cys-416, Cys-431, and Cys-436. The BRCT domain occupies 596–675 (GVPQTFAGKT…ADFLQLIDRV (80 aa)).

This sequence belongs to the NAD-dependent DNA ligase family. LigA subfamily. The cofactor is Mg(2+). Requires Mn(2+) as cofactor.

It carries out the reaction NAD(+) + (deoxyribonucleotide)n-3'-hydroxyl + 5'-phospho-(deoxyribonucleotide)m = (deoxyribonucleotide)n+m + AMP + beta-nicotinamide D-nucleotide.. In terms of biological role, DNA ligase that catalyzes the formation of phosphodiester linkages between 5'-phosphoryl and 3'-hydroxyl groups in double-stranded DNA using NAD as a coenzyme and as the energy source for the reaction. It is essential for DNA replication and repair of damaged DNA. This is DNA ligase from Heliobacterium modesticaldum (strain ATCC 51547 / Ice1).